A 418-amino-acid chain; its full sequence is MKLKSDFLGLLYSRGYFNQCTDLAELDQLMSKECVIAYIGFDCTARSLHIGSLMQIMILRYLQKCGHKPIVLLGNGTTKIGDPSGKDKSRTLLSSSDIQENTLGIRKVLEKFIVCGGGVSDALLVYNAEWLDKLNYIDFLRNIGRHFSVNNMLTFDSVKLRLEREQNLSFLEFNYMLLQAYDFIELNQRYNCLLQIGGSDQWGNIVNGVELGRKLKLPQLFGLTTHLLLTSTGEKMGKTADGAIWLDGEMYSPADYWQYFRNVKDEDVGRFLRLFTELPLTEIEKLENLKGYEINEAKKILATEATRICHGEKIAQDIAYDALKVFECNDHSGLPVFYVCKSEIELGLSVVKLLQVSGMEKSNSSAKRLINDKGCKINDIIILDVNYKLSLQDFCGMSYIKLSCGKKRHLKVVLESDL.

L-tyrosine is bound at residue tyrosine 38. A 'HIGH' region motif is present at residues 43 to 52 (CTARSLHIGS). L-tyrosine is bound by residues tyrosine 175 and glutamine 179. The 'KMSKS' region motif lies at 235–239 (KMGKT). Lysine 238 is an ATP binding site. An S4 RNA-binding domain is found at 348–413 (LSVVKLLQVS…CGKKRHLKVV (66 aa)).

This sequence belongs to the class-I aminoacyl-tRNA synthetase family. TyrS type 1 subfamily. Homodimer.

The protein resides in the cytoplasm. The catalysed reaction is tRNA(Tyr) + L-tyrosine + ATP = L-tyrosyl-tRNA(Tyr) + AMP + diphosphate + H(+). In terms of biological role, catalyzes the attachment of tyrosine to tRNA(Tyr) in a two-step reaction: tyrosine is first activated by ATP to form Tyr-AMP and then transferred to the acceptor end of tRNA(Tyr). The chain is Tyrosine--tRNA ligase from Ehrlichia ruminantium (strain Welgevonden).